The primary structure comprises 60 residues: Potassium channel toxin-like Tx677 (60 aa).

The signal sequence occupies residues 1-22 (MKISALVMITLLICSMMILCQG). Cystine bridges form between cysteine 30-cysteine 51, cysteine 36-cysteine 56, and cysteine 40-cysteine 58.

Belongs to the short scorpion toxin superfamily. Potassium channel inhibitor family. As to expression, expressed by the venom gland.

The protein localises to the secreted. In terms of biological role, weakly inhibits Kv11.1/KCNH2/ERG1, Kv1.2/KCNA2 and Kv1.3/KCNA3 voltage-gated potassium channels. The sequence is that of Potassium channel toxin-like Tx677 from Buthus israelis (Israeli scorpion).